The sequence spans 160 residues: Bursicon (160 aa).

A signal peptide spans 1 to 20; the sequence is MSVLNTFLVIVALILCYVND. Residues 38-131 enclose the CTCK domain; it reads CQECQMTAVI…PLQCMCRPCG (94 aa). 5 disulfide bridges follow: Cys41–Cys90, Cys55–Cys104, Cys65–Cys125, Cys69–Cys127, and Cys87–Cys130.

Heterodimer of burs and pburs.

It localises to the secreted. Final heterodimeric neurohormone released at the end of the molting cycle, involved in the sclerotization (tanning) of the insect cuticle, melanization and wing spreading. The sequence is that of Bursicon from Bombyx mori (Silk moth).